The following is a 418-amino-acid chain: Adenosylhomocysteinase (418 aa).

3 residues coordinate substrate: Thr53, Asp125, and Glu150. 151 to 153 (TTT) is an NAD(+) binding site. Substrate contacts are provided by Lys180 and Asp184. Residues Asn185, 214-219 (GYGWCG), Glu237, Asn272, 293-295 (SGH), and Asn340 contribute to the NAD(+) site.

Belongs to the adenosylhomocysteinase family. Requires NAD(+) as cofactor.

The protein localises to the cytoplasm. The catalysed reaction is S-adenosyl-L-homocysteine + H2O = L-homocysteine + adenosine. The protein operates within amino-acid biosynthesis; L-homocysteine biosynthesis; L-homocysteine from S-adenosyl-L-homocysteine: step 1/1. In terms of biological role, may play a key role in the regulation of the intracellular concentration of adenosylhomocysteine. This Aquifex aeolicus (strain VF5) protein is Adenosylhomocysteinase.